The primary structure comprises 307 residues: MIDLIVLGAAAGGGFPQWNSNAPACRRARADDPAAPSRTQASIAVSGDGAHWFVVNASPDLRAQIGQTPALHPRHGLRSTPIAGVILTGGEVDTVTGLLTLRERQPFTLLATPPVLDLLDANPIFEALDRSIVPRVPLALDQPFALALPDGTPAGLTITPFAVPGKVPLYAESGPDPAAIVENGETIGLAMTDGVRHAYFIPGCARMTGPLRARLRGADLVFFDGTLWTDDEMLRAGVGQKTGQRMGHMSVSGDGGTIDAFADLDVRRKVLIHINNSNPLLLADSPERQVAHQAGWEVSFDGMRITT.

The protein belongs to the PqqB family.

It participates in cofactor biosynthesis; pyrroloquinoline quinone biosynthesis. Functionally, may be involved in the transport of PQQ or its precursor to the periplasm. The chain is Coenzyme PQQ synthesis protein B from Gluconacetobacter diazotrophicus (strain ATCC 49037 / DSM 5601 / CCUG 37298 / CIP 103539 / LMG 7603 / PAl5).